A 308-amino-acid polypeptide reads, in one-letter code: Oxygen-dependent coproporphyrinogen-III oxidase (308 aa).

Substrate is bound at residue Ser-100. A divalent metal cation is bound by residues His-104 and His-114. Catalysis depends on His-114, which acts as the Proton donor. Position 116–118 (Asn-116–Arg-118) interacts with substrate. Positions 153 and 183 each coordinate a divalent metal cation. An important for dimerization region spans residues Tyr-248–Lys-283. A substrate-binding site is contributed by Gly-266–Arg-268.

It belongs to the aerobic coproporphyrinogen-III oxidase family. As to quaternary structure, homodimer. A divalent metal cation serves as cofactor.

It is found in the cytoplasm. The enzyme catalyses coproporphyrinogen III + O2 + 2 H(+) = protoporphyrinogen IX + 2 CO2 + 2 H2O. It functions in the pathway porphyrin-containing compound metabolism; protoporphyrin-IX biosynthesis; protoporphyrinogen-IX from coproporphyrinogen-III (O2 route): step 1/1. Involved in the heme biosynthesis. Catalyzes the aerobic oxidative decarboxylation of propionate groups of rings A and B of coproporphyrinogen-III to yield the vinyl groups in protoporphyrinogen-IX. The sequence is that of Oxygen-dependent coproporphyrinogen-III oxidase from Francisella tularensis subsp. tularensis (strain FSC 198).